The following is a 187-amino-acid chain: Elongation factor P (187 aa).

Belongs to the elongation factor P family.

The protein resides in the cytoplasm. It functions in the pathway protein biosynthesis; polypeptide chain elongation. Its function is as follows. Involved in peptide bond synthesis. Stimulates efficient translation and peptide-bond synthesis on native or reconstituted 70S ribosomes in vitro. Probably functions indirectly by altering the affinity of the ribosome for aminoacyl-tRNA, thus increasing their reactivity as acceptors for peptidyl transferase. This Frankia casuarinae (strain DSM 45818 / CECT 9043 / HFP020203 / CcI3) protein is Elongation factor P.